The chain runs to 643 residues: Macrolide export ATP-binding/permease protein MacB (643 aa).

Residues 4-242 (IEIKELNRYF…VNNQSKAKSR (239 aa)) form the ABC transporter domain. 40–47 (GQSGSGKS) serves as a coordination point for ATP. 4 helical membrane-spanning segments follow: residues 269-289 (LLTM…VALG), 523-543 (IAFI…LVSV), 572-592 (ILIC…IGGI), and 603-623 (VFST…GVIF).

The protein belongs to the ABC transporter superfamily. Macrolide exporter (TC 3.A.1.122) family. In terms of assembly, homodimer. Part of the tripartite efflux system MacAB-TolC, which is composed of an inner membrane transporter, MacB, a periplasmic membrane fusion protein, MacA, and an outer membrane component, TolC. The complex forms a large protein conduit and can translocate molecules across both the inner and outer membranes. Interacts with MacA.

The protein localises to the cell inner membrane. Its function is as follows. Part of the tripartite efflux system MacAB-TolC. MacB is a non-canonical ABC transporter that contains transmembrane domains (TMD), which form a pore in the inner membrane, and an ATP-binding domain (NBD), which is responsible for energy generation. Confers resistance against macrolides. In Mannheimia succiniciproducens (strain KCTC 0769BP / MBEL55E), this protein is Macrolide export ATP-binding/permease protein MacB.